The primary structure comprises 308 residues: Porphobilinogen deaminase (308 aa).

Residue cysteine 240 is modified to S-(dipyrrolylmethanemethyl)cysteine.

Belongs to the HMBS family. In terms of assembly, monomer. Dipyrromethane is required as a cofactor.

The catalysed reaction is 4 porphobilinogen + H2O = hydroxymethylbilane + 4 NH4(+). Its pathway is porphyrin-containing compound metabolism; protoporphyrin-IX biosynthesis; coproporphyrinogen-III from 5-aminolevulinate: step 2/4. Functionally, tetrapolymerization of the monopyrrole PBG into the hydroxymethylbilane pre-uroporphyrinogen in several discrete steps. The sequence is that of Porphobilinogen deaminase from Campylobacter lari (strain RM2100 / D67 / ATCC BAA-1060).